The primary structure comprises 850 residues: Pro-neuregulin-2, membrane-bound isoform (850 aa).

Residues 1-96 (MRQVCCSALP…AAAAGGMRRD (96 aa)) are disordered. Residues 1–111 (MRQVCCSALP…SMLLFGVSLA (111 aa)) constitute a propeptide that is removed on maturation. The span at 20–59 (SSYSDSSSSSSERSSSSSSSSSESGSSSRSSSNNSSISRP) shows a compositional bias: low complexity. Asn52 and Asn53 each carry an N-linked (GlcNAc...) asparagine glycan. Residues 60 to 74 (AAPPEPRPQQQPQPR) are compositionally biased toward pro residues. The segment covering 75 to 92 (SPAARRAAARSRAAAAGG) has biased composition (low complexity). The Extracellular portion of the chain corresponds to 112–405 (CYSPSLKSVQ…QKAEELYQKR (294 aa)). Asn147, Asn278, and Asn346 each carry an N-linked (GlcNAc...) asparagine glycan. The Ig-like C2-type domain maps to 237–332 (PKLKKMKSQT…RGRLYVNSVS (96 aa)). 4 cysteine pairs are disulfide-bonded: Cys257–Cys311, Cys345–Cys359, Cys353–Cys370, and Cys372–Cys381. The EGF-like domain maps to 341–382 (HARKCNETAKSYCVNGGVCYYIEGINQLSCKCPNGFFGQRCL). The helical transmembrane segment at 406 to 426 (VLTITGICVALLVVGIVCVVA) threads the bilayer. At 427 to 850 (YCKTKKQRKQ…PRAKQDSAPL (424 aa)) the chain is on the cytoplasmic side. Disordered stretches follow at residues 492–535 (TFSG…DSQS), 566–585 (EERR…SLRD), 647–681 (LLRH…YYPA), 700–788 (LPAS…DGAL), and 801–850 (AHDA…SAPL). Low complexity predominate over residues 494 to 506 (SGSHSCSPSHHCS). Over residues 514-527 (HRHESHTWSLERSE) the composition is skewed to basic and acidic residues. The span at 651–665 (PAPPGPGPGPGPGPG) shows a compositional bias: pro residues. The segment covering 750–767 (GLAAQRARAARDSLSLSS) has biased composition (low complexity).

Belongs to the neuregulin family. In terms of assembly, interacts with ERBB3 and ERBB4. In terms of processing, proteolytic cleavage close to the plasma membrane on the external face leads to the release of the soluble growth factor form. Extensive glycosylation precedes the proteolytic cleavage. As to expression, restricted to the cerebellum in the adult.

It is found in the cell membrane. Its subcellular location is the secreted. Its function is as follows. Direct ligand for ERBB3 and ERBB4 tyrosine kinase receptors. Concomitantly recruits ERBB1 and ERBB2 coreceptors, resulting in ligand-stimulated tyrosine phosphorylation and activation of the ERBB receptors. May also promote the heterodimerization with the EGF receptor. This is Pro-neuregulin-2, membrane-bound isoform (NRG2) from Homo sapiens (Human).